The primary structure comprises 495 residues: Polybrominated aromatic compounds synthase (495 aa).

Cys-437 is a heme binding site.

It belongs to the cytochrome P450 family. Heme is required as a cofactor.

Cytochrome P450 protein involved in the biosynthesis of polybrominated aromatic organic compounds. In the presence of ferredoxin, ferredoxin reductase and NADH, catalyzes the coupling of bromophenols and bromopyrroles, forming various polybrominated biphenyls and hydroxylated polybrominated diphenyl ethers (OH-BDE). Can also mediate the heterocoupling of 3,5-dibromocatechol, forming six different compounds, including polybrominated dibenzo-p-dioxins, which are among the most toxic molecules known to man. This chain is Polybrominated aromatic compounds synthase, found in Marinomonas mediterranea (strain ATCC 700492 / JCM 21426 / NBRC 103028 / MMB-1).